The following is a 332-amino-acid chain: Protein pelota homolog (332 aa).

The protein belongs to the eukaryotic release factor 1 family. Pelota subfamily. In terms of assembly, monomer. Requires a divalent metal cation as cofactor.

The protein resides in the cytoplasm. In terms of biological role, may function in recognizing stalled ribosomes, interact with stem-loop structures in stalled mRNA molecules, and effect endonucleolytic cleavage of the mRNA. May play a role in the release non-functional ribosomes and degradation of damaged mRNAs. Has endoribonuclease activity. The polypeptide is Protein pelota homolog (Pyrobaculum aerophilum (strain ATCC 51768 / DSM 7523 / JCM 9630 / CIP 104966 / NBRC 100827 / IM2)).